The sequence spans 388 residues: Succinate--CoA ligase [ADP-forming] subunit beta (388 aa).

One can recognise an ATP-grasp domain in the interval 9–244 (KSLFAEYGLP…PSQDDAREAH (236 aa)). ATP is bound by residues Lys-46, 53-55 (GRG), Glu-99, Thr-102, and Glu-107. Mg(2+) is bound by residues Asn-199 and Asp-213. Substrate is bound by residues Asn-264 and 321 to 323 (GIV).

Belongs to the succinate/malate CoA ligase beta subunit family. In terms of assembly, heterotetramer of two alpha and two beta subunits. Mg(2+) serves as cofactor.

The catalysed reaction is succinate + ATP + CoA = succinyl-CoA + ADP + phosphate. The enzyme catalyses GTP + succinate + CoA = succinyl-CoA + GDP + phosphate. It participates in carbohydrate metabolism; tricarboxylic acid cycle; succinate from succinyl-CoA (ligase route): step 1/1. In terms of biological role, succinyl-CoA synthetase functions in the citric acid cycle (TCA), coupling the hydrolysis of succinyl-CoA to the synthesis of either ATP or GTP and thus represents the only step of substrate-level phosphorylation in the TCA. The beta subunit provides nucleotide specificity of the enzyme and binds the substrate succinate, while the binding sites for coenzyme A and phosphate are found in the alpha subunit. This Shewanella sp. (strain MR-4) protein is Succinate--CoA ligase [ADP-forming] subunit beta.